Consider the following 759-residue polypeptide: Phosphoribosylformylglycinamidine synthase subunit PurL (759 aa).

Residue His34 is part of the active site. Tyr37 provides a ligand contact to ATP. Residue Glu95 coordinates Mg(2+). Residues 96–99 and Arg118 contribute to the substrate site; that span reads SHNH. His97 serves as the catalytic Proton acceptor. Position 119 (Asp119) interacts with Mg(2+). Gln243 serves as a coordination point for substrate. Asp271 serves as a coordination point for Mg(2+). 315-317 is a substrate binding site; the sequence is ESQ. Positions 388–422 are disordered; that stretch reads DGAPMNDLASESPTQPDRDLPDPEPSLDEAVESVV. Positions 520 and 557 each coordinate ATP. Asn558 contacts Mg(2+). Ser560 contacts substrate.

This sequence belongs to the FGAMS family. Monomer. Part of the FGAM synthase complex composed of 1 PurL, 1 PurQ and 2 PurS subunits.

It is found in the cytoplasm. The catalysed reaction is N(2)-formyl-N(1)-(5-phospho-beta-D-ribosyl)glycinamide + L-glutamine + ATP + H2O = 2-formamido-N(1)-(5-O-phospho-beta-D-ribosyl)acetamidine + L-glutamate + ADP + phosphate + H(+). Its pathway is purine metabolism; IMP biosynthesis via de novo pathway; 5-amino-1-(5-phospho-D-ribosyl)imidazole from N(2)-formyl-N(1)-(5-phospho-D-ribosyl)glycinamide: step 1/2. Its function is as follows. Part of the phosphoribosylformylglycinamidine synthase complex involved in the purines biosynthetic pathway. Catalyzes the ATP-dependent conversion of formylglycinamide ribonucleotide (FGAR) and glutamine to yield formylglycinamidine ribonucleotide (FGAM) and glutamate. The FGAM synthase complex is composed of three subunits. PurQ produces an ammonia molecule by converting glutamine to glutamate. PurL transfers the ammonia molecule to FGAR to form FGAM in an ATP-dependent manner. PurS interacts with PurQ and PurL and is thought to assist in the transfer of the ammonia molecule from PurQ to PurL. The chain is Phosphoribosylformylglycinamidine synthase subunit PurL from Halorubrum lacusprofundi (strain ATCC 49239 / DSM 5036 / JCM 8891 / ACAM 34).